Consider the following 199-residue polypeptide: Imidazoleglycerol-phosphate dehydratase (199 aa).

This sequence belongs to the imidazoleglycerol-phosphate dehydratase family.

Its subcellular location is the cytoplasm. It catalyses the reaction D-erythro-1-(imidazol-4-yl)glycerol 3-phosphate = 3-(imidazol-4-yl)-2-oxopropyl phosphate + H2O. It functions in the pathway amino-acid biosynthesis; L-histidine biosynthesis; L-histidine from 5-phospho-alpha-D-ribose 1-diphosphate: step 6/9. This chain is Imidazoleglycerol-phosphate dehydratase, found in Methylibium petroleiphilum (strain ATCC BAA-1232 / LMG 22953 / PM1).